A 292-amino-acid polypeptide reads, in one-letter code: Acetyl-coenzyme A carboxylase carboxyl transferase subunit beta (292 aa).

The region spanning 29–292 (LWVKCSECGQ…HGVKELVQTN (264 aa)) is the CoA carboxyltransferase N-terminal domain. Zn(2+) contacts are provided by Cys33, Cys36, Cys52, and Cys55. Residues 33–55 (CSECGQVAYRKDLISNFNVCSNC) form a C4-type zinc finger.

It belongs to the AccD/PCCB family. As to quaternary structure, acetyl-CoA carboxylase is a heterohexamer composed of biotin carboxyl carrier protein (AccB), biotin carboxylase (AccC) and two subunits each of ACCase subunit alpha (AccA) and ACCase subunit beta (AccD). Requires Zn(2+) as cofactor.

Its subcellular location is the cytoplasm. The catalysed reaction is N(6)-carboxybiotinyl-L-lysyl-[protein] + acetyl-CoA = N(6)-biotinyl-L-lysyl-[protein] + malonyl-CoA. The protein operates within lipid metabolism; malonyl-CoA biosynthesis; malonyl-CoA from acetyl-CoA: step 1/1. Its function is as follows. Component of the acetyl coenzyme A carboxylase (ACC) complex. Biotin carboxylase (BC) catalyzes the carboxylation of biotin on its carrier protein (BCCP) and then the CO(2) group is transferred by the transcarboxylase to acetyl-CoA to form malonyl-CoA. The protein is Acetyl-coenzyme A carboxylase carboxyl transferase subunit beta of Prochlorococcus marinus subsp. pastoris (strain CCMP1986 / NIES-2087 / MED4).